The following is a 181-amino-acid chain: Negative modulator of initiation of replication (181 aa).

Interaction with DNA regions lie at residues 87 to 88 (AV), 116 to 120 (RTRVY), and 150 to 156 (NTNTGRK).

The protein belongs to the SeqA family. In terms of assembly, homodimer. Polymerizes to form helical filaments.

It is found in the cytoplasm. Functionally, negative regulator of replication initiation, which contributes to regulation of DNA replication and ensures that replication initiation occurs exactly once per chromosome per cell cycle. Binds to pairs of hemimethylated GATC sequences in the oriC region, thus preventing assembly of replication proteins and re-initiation at newly replicated origins. Repression is relieved when the region becomes fully methylated. In Shigella dysenteriae serotype 1 (strain Sd197), this protein is Negative modulator of initiation of replication.